Reading from the N-terminus, the 141-residue chain is Hemoglobin subunit alpha-D (141 aa).

Positions 1–141 (VLTHEDCELL…VGDMLAEKYR (141 aa)) constitute a Globin domain. Heme b is bound by residues H58 and H87.

This sequence belongs to the globin family. There are three forms of hemoglobin in Sphenodon: A, A' and D. Hb A is a tetramer of two alpha-A and two beta-1, Hb A' is a tetramer of two alpha-a and two beta-2, Hb D is a tetramer of two alpha-D and two beta-2. As to expression, red blood cells.

Involved in oxygen transport from the lung to the various peripheral tissues. The sequence is that of Hemoglobin subunit alpha-D (HBAD) from Sphenodon punctatus (Tuatara).